We begin with the raw amino-acid sequence, 275 residues long: 4-diphosphocytidyl-2-C-methyl-D-erythritol kinase (275 aa).

Lys-9 is a catalytic residue. Position 90 to 100 (90 to 100) interacts with ATP; it reads PVGGGLGGGSS. Residue Asp-132 is part of the active site.

Belongs to the GHMP kinase family. IspE subfamily.

The catalysed reaction is 4-CDP-2-C-methyl-D-erythritol + ATP = 4-CDP-2-C-methyl-D-erythritol 2-phosphate + ADP + H(+). Its pathway is isoprenoid biosynthesis; isopentenyl diphosphate biosynthesis via DXP pathway; isopentenyl diphosphate from 1-deoxy-D-xylulose 5-phosphate: step 3/6. Catalyzes the phosphorylation of the position 2 hydroxy group of 4-diphosphocytidyl-2C-methyl-D-erythritol. This is 4-diphosphocytidyl-2-C-methyl-D-erythritol kinase from Sulfurihydrogenibium sp. (strain YO3AOP1).